Consider the following 289-residue polypeptide: ATP synthase gamma chain (289 aa).

The protein belongs to the ATPase gamma chain family. In terms of assembly, F-type ATPases have 2 components, CF(1) - the catalytic core - and CF(0) - the membrane proton channel. CF(1) has five subunits: alpha(3), beta(3), gamma(1), delta(1), epsilon(1). CF(0) has three main subunits: a, b and c.

The protein localises to the cell inner membrane. In terms of biological role, produces ATP from ADP in the presence of a proton gradient across the membrane. The gamma chain is believed to be important in regulating ATPase activity and the flow of protons through the CF(0) complex. The chain is ATP synthase gamma chain from Haemophilus influenzae (strain 86-028NP).